A 1902-amino-acid chain; its full sequence is Plexin-B3 (1902 aa).

An N-terminal signal peptide occupies residues 1–36 (MLTDFLQAPVMAPWSPFSLHLLLLFLPLLPLTRVHR). Residues 37-461 (FSVPNTSFNH…TAQQVDRILV (425 aa)) enclose the Sema domain. Topologically, residues 37–1245 (FSVPNTSFNH…MMSTFPVEAQ (1209 aa)) are extracellular. N-linked (GlcNAc...) asparagine glycosylation is present at asparagine 41. Cystine bridges form between cysteine 88-cysteine 97 and cysteine 122-cysteine 130. Residue asparagine 221 is glycosylated (N-linked (GlcNAc...) asparagine). 3 cysteine pairs are disulfide-bonded: cysteine 257-cysteine 360, cysteine 273-cysteine 305, and cysteine 323-cysteine 347. The interval 353 to 372 (DSPESYPCGDEHTPSPIAGR) is disordered. 2 N-linked (GlcNAc...) asparagine glycosylation sites follow: asparagine 416 and asparagine 469. The PSI 1 domain occupies 463-515 (ACPQFPNCTTCLQARDPLCGWCILQGRCTRRGECGRAAQPNHWLWSYEDNHCP). Cystine bridges form between cysteine 464–cysteine 481, cysteine 470–cysteine 514, cysteine 473–cysteine 490, cysteine 484–cysteine 496, and cysteine 551–cysteine 569. PSI domains lie at 609–671 (DCSA…EACP) and 776–822 (DCAM…QLCP). N-linked (GlcNAc...) asparagine glycans are attached at residues asparagine 791, asparagine 889, asparagine 910, asparagine 946, asparagine 1090, and asparagine 1207. 4 consecutive IPT/TIG domains span residues 823–914 (IPSI…FTYQ), 915–1001 (DPVL…FRYT), 1003–1134 (NPQL…FLYQ), and 1154–1221 (KPGH…QMGN). Residues 1246–1266 (LGLGMGAAVLIAAVLLLTLMY) traverse the membrane as a helical segment. Over 1267-1902 (RHKSKKALRD…ALVEYKVTDL (636 aa)) the chain is Cytoplasmic.

Belongs to the plexin family. As to quaternary structure, binds MET and MST1R. Interacts with RIT2/RIN. May form homodimers (via Sema domain). Interacts (via cytoplasmic domain) with FSCN1, ARHGDIA and RAC1. Expressed in brain (at protein level). In cerebellum, strongest expression detected in Purkinje and granular cells. Detected at very low levels in several fetal tissues, including dorsal root ganglia (DRG), heart, lung, optic bulb, brain and liver.

The protein localises to the cell membrane. Receptor for SEMA5A that plays a role in axon guidance, invasive growth and cell migration. Stimulates neurite outgrowth and mediates Ca(2+)/Mg(2+)-dependent cell aggregation. In glioma cells, SEMA5A stimulation of PLXNB3 results in the disassembly of F-actin stress fibers, disruption of focal adhesions and cellular collapse as well as inhibition of cell migration and invasion through ARHGDIA-mediated inactivation of RAC1. Seem to be non-essential for normal development and function of the central nervous system. This is Plexin-B3 (Plxnb3) from Mus musculus (Mouse).